The chain runs to 309 residues: General transcription factor IIH subunit 3 (309 aa).

A C4-type zinc finger spans residues 269 to 286; that stretch reads CSVCLSIFCNFSPICTTC.

It belongs to the TFB4 family. Part of a TFIID-containing RNA polymerase II pre-initiation complex that is composed of TBP and at least GTF2A1, GTF2A2, GTF2E1, GTF2E2, GTF2F1, GTF2H2, GTF2H3, GTF2H4, GTF2H5, GTF2B, TCEA1, ERCC2, ERCC3, TAF1, TAF2, TAF3, TAF4, TAF5, TAF6, TAF7, TAF8, TAF9, TAF10, TAF11, TAF12 and TAF13. Component of the 7-subunit TFIIH core complex composed of XPB/ERCC3, XPD/ERCC2, GTF2H1, GTF2H2, GTF2H3, GTF2H4 and GTF2H5, which is active in NER. The core complex associates with the 3-subunit CDK-activating kinase (CAK) module composed of CCNH/cyclin H, CDK7 and MNAT1 to form the 10-subunit holoenzyme (holo-TFIIH) active in transcription. Interacts with RARA; the interaction requires prior phosphorylation of RARA on 'Ser-369' which then enhances interaction of RARA with CDK7.

It localises to the nucleus. Component of the general transcription and DNA repair factor IIH (TFIIH) core complex, which is involved in general and transcription-coupled nucleotide excision repair (NER) of damaged DNA and, when complexed to CAK, in RNA transcription by RNA polymerase II. In NER, TFIIH acts by opening DNA around the lesion to allow the excision of the damaged oligonucleotide and its replacement by a new DNA fragment. In transcription, TFIIH has an essential role in transcription initiation. When the pre-initiation complex (PIC) has been established, TFIIH is required for promoter opening and promoter escape. Phosphorylation of the C-terminal tail (CTD) of the largest subunit of RNA polymerase II by the kinase module CAK controls the initiation of transcription. The protein is General transcription factor IIH subunit 3 (Gtf2h3) of Rattus norvegicus (Rat).